The chain runs to 516 residues: Melianol synthase CYP71BQ17 (516 aa).

The helical transmembrane segment at 14-34 (MPHLPSLPVSLSFLLFFLMLV) threads the bilayer. Cysteine 454 is a heme binding site.

It belongs to the cytochrome P450 family. Heme serves as cofactor. As to expression, mainly expressed in roots and, to a lesser extent, in stems and old leaves.

Its subcellular location is the membrane. It carries out the reaction dihydroniloticin + 2 reduced [NADPH--hemoprotein reductase] + 2 O2 = melianol + 2 oxidized [NADPH--hemoprotein reductase] + 3 H2O + 2 H(+). The protein operates within secondary metabolite biosynthesis; terpenoid biosynthesis. Its function is as follows. Monooxygenase involved in the biosynthesis of quassinoids triterpene natural products such as ailanthone, chaparrinone, glaucarubinone and amarolide, allelopathic degraded triterpene lactones inhibiting the growth of other plants, and possessing antimalarial, antifeedant, insecticidal, anti-inflammatory and anticancer activities. Catalyzes the conversion of dihydroniloticin to the protolimonoid melianol. This is Melianol synthase CYP71BQ17 from Ailanthus altissima (Tree-of-heaven).